Reading from the N-terminus, the 104-residue chain is Protein METHYLENE BLUE SENSITIVITY 2 (104 aa).

A compositionally biased stretch (basic residues) spans 1–11 (MTGKAKPKKHT). Disordered stretches follow at residues 1-46 (MTGK…GHAK) and 64-104 (IHHE…SLKK). Basic and acidic residues-rich tracts occupy residues 36–46 (RTGKEKGGHAK) and 73–82 (LTYEEPRNLH).

The protein localises to the nucleus. It is found in the cytoplasm. Its subcellular location is the stress granule. Required for acclimation to reactive oxygen species (ROS) responses downstream of beta-cyclocitral, including singlet oxygen 1O(2) detoxification reactions, especially upon light-mediated photooxidative stress, and leading to programmed cell death. Prevents leaf senescence. In Arabidopsis thaliana (Mouse-ear cress), this protein is Protein METHYLENE BLUE SENSITIVITY 2.